The primary structure comprises 396 residues: MWNSSDANFSCYHESVLGYRYVAVSWGVVVAVTGTVGNVLTLLALAIQPKLRTRFNLLIANLTLADLLYCTLLQPFSVDTYLHLHWRTGATFCRVFGLLLFASNSVSILTLCLIALGRYLLIAHPKLFPQVFSAKGIVLALVSTWVVGVASFAPLWPIYILVPVVCTCSFDRIRGRPYTTILMGIYFVLGLSSVGIFYCLIHRQVKRAAQALDQYKLRQASIHSNHVARTDEAMPGRFQELDSRLASGGPSEGISSEPVSAATTQTLEGDSSEVGDQINSKRAKQMAEKSPPEASAKAQPIKGARRAPDSSSEFGKVTRMCFAVFLCFALSYIPFLLLNILDARVQAPRVVHMLAANLTWLNGCINPVLYAAMNRQFRQAYGSILKRGPRSFHRLH.

Residues 1–26 (MWNSSDANFSCYHESVLGYRYVAVSW) lie on the Extracellular side of the membrane. 2 N-linked (GlcNAc...) asparagine glycosylation sites follow: Asn-3 and Asn-8. The helical transmembrane segment at 27-47 (GVVVAVTGTVGNVLTLLALAI) threads the bilayer. Over 48–57 (QPKLRTRFNL) the chain is Cytoplasmic. The chain crosses the membrane as a helical span at residues 58–78 (LIANLTLADLLYCTLLQPFSV). Topologically, residues 79–94 (DTYLHLHWRTGATFCR) are extracellular. Residues 95-115 (VFGLLLFASNSVSILTLCLIA) form a helical membrane-spanning segment. The Cytoplasmic portion of the chain corresponds to 116–144 (LGRYLLIAHPKLFPQVFSAKGIVLALVST). Residues 145-165 (WVVGVASFAPLWPIYILVPVV) traverse the membrane as a helical segment. The Extracellular portion of the chain corresponds to 166 to 180 (CTCSFDRIRGRPYTT). The chain crosses the membrane as a helical span at residues 181-201 (ILMGIYFVLGLSSVGIFYCLI). The Cytoplasmic segment spans residues 202–320 (HRQVKRAAQA…SSEFGKVTRM (119 aa)). Phosphoserine occurs at positions 221 and 224. The disordered stretch occupies residues 244 to 311 (RLASGGPSEG…KGARRAPDSS (68 aa)). Positions 247-260 (SGGPSEGISSEPVS) are enriched in low complexity. Residues Thr-263 and Thr-264 each carry the phosphothreonine modification. The helical transmembrane segment at 321-341 (CFAVFLCFALSYIPFLLLNIL) threads the bilayer. Topologically, residues 342 to 352 (DARVQAPRVVH) are extracellular. The chain crosses the membrane as a helical span at residues 353–373 (MLAANLTWLNGCINPVLYAAM). The Cytoplasmic segment spans residues 374-396 (NRQFRQAYGSILKRGPRSFHRLH).

This sequence belongs to the G-protein coupled receptor 1 family. As to quaternary structure, interacts with ARRB2 and ARR3. Post-translationally, phosphorylated by a subset of GPR84-activating ligands. Constitutively phosphorylated at Ser-221 and Ser-224 in the absence of 2-HTP. By contrast, Thr-263 and Thr-264 are phosphorylated only following prior cell treatment with 2-HTP. As to expression, expressed predominantly in hematopoietic tissues. High levels detected in the bone marrow and lower levels in the peripheral leukocytes and lung. Also expressed in brain, heart, muscle, colon, thymus, spleen, kidney, liver, placenta and intestine. Within the leukocyte population expression is higher in neutrophils and eosinophils relative to T- or B-lymphocytes.

It localises to the cell membrane. In terms of biological role, g protein-coupled receptor that responds endogenously to dietary fatty acids or nutrient, specifically medium-chain free fatty acid (FFA) with carbon chain lengths of C9 to C14. Capric acid (C10:0), undecanoic acid (C11:0) and lauric acid (C12:0) are the most potent agonists. In immune cells, functions as a pro-inflammatory receptor via 6-OAU and promotes the expression of pro-inflammatory mediators such as TNFalpha, IL-6 and IL-12B as well as stimulating chemotactic responses through activation of signaling mediators AKT, ERK and NF-kappa-B. In addition, triggers increased bacterial adhesion and phagocytosis in macrophages and regulates pro-inflammatory function via enhancing NLRP3 inflammasome activation. Also plays an important role in inflammation by modulating neutrophil functions. Mechanistically, promotes neutrophil chemotaxis, reactive oxygen species (ROS) production and degranulation via LYN-AKT/ERK pathway. To regulate ROS, communicates with the two formyl peptide receptors FPR2 and FPR1 to control the NADPH oxidase activity in neutrophils. The protein is G-protein coupled receptor 84 (GPR84) of Homo sapiens (Human).